The chain runs to 498 residues: Histidine--tRNA ligase (498 aa).

The protein belongs to the class-II aminoacyl-tRNA synthetase family. As to quaternary structure, homodimer.

It localises to the cytoplasm. The catalysed reaction is tRNA(His) + L-histidine + ATP = L-histidyl-tRNA(His) + AMP + diphosphate + H(+). This Bartonella quintana (strain Toulouse) (Rochalimaea quintana) protein is Histidine--tRNA ligase.